The following is a 317-amino-acid chain: Melanocyte-stimulating hormone receptor (317 aa).

Over 1–37 (MPMQGAQRKLLGSLNSTPTATSNLGLAANHTGAPCLE) the chain is Extracellular. Asn-29 is a glycosylation site (N-linked (GlcNAc...) asparagine). Residues 38-63 (VSIPDGLFLSLGLVSLVENVLVVAAI) traverse the membrane as a helical segment. The Cytoplasmic portion of the chain corresponds to 64-72 (AKNRNLHSS). A helical membrane pass occupies residues 73-93 (MYCFICCLALSDLLVSGSNML). Topologically, residues 94-118 (ETAVILLLEAGALATRTSAVQRLHN) are extracellular. Residues 119-140 (TIDVLTCSSMLCSLCFLGAIAV) form a helical membrane-spanning segment. Over 141–163 (DRYISIFYALRYHSIVTLPRTQR) the chain is Cytoplasmic. The helical transmembrane segment at 164–183 (VIAAIWVASVLSSTLFITYY) threads the bilayer. The Extracellular portion of the chain corresponds to 184-191 (DHAAVLLC). The helical transmembrane segment at 192–211 (LVVFFLAMLVLMAVLYVHML) threads the bilayer. The Cytoplasmic segment spans residues 212 to 240 (ARACQHAHGIIRLHKRQSPAHQGFGLRGA). The chain crosses the membrane as a helical span at residues 241 to 266 (ATLTILLGIFFLCWGPFFLHLTLVVF). Residues 267 to 279 (CPQHLTCSCIFKN) lie on the Extracellular side of the membrane. A helical transmembrane segment spans residues 280 to 300 (FKVFLTLIICNTIIDPLIYAF). Residues 301 to 317 (RSQELRRTLKEVLLCSW) lie on the Cytoplasmic side of the membrane. Residue Cys-315 is the site of S-palmitoyl cysteine attachment.

Belongs to the G-protein coupled receptor 1 family. As to quaternary structure, interacts with MGRN1, but does not undergo MGRN1-mediated ubiquitination; this interaction competes with GNAS-binding and thus inhibits agonist-induced cAMP production. Interacts with OPN3; the interaction results in a decrease in MC1R-mediated cAMP signaling and ultimately a decrease in melanin production in melanocytes.

The protein localises to the cell membrane. Functionally, receptor for MSH (alpha, beta and gamma) and ACTH. The activity of this receptor is mediated by G proteins which activate adenylate cyclase. Mediates melanogenesis, the production of eumelanin (black/brown) and phaeomelanin (red/yellow), via regulation of cAMP signaling in melanocytes. This is Melanocyte-stimulating hormone receptor (MC1R) from Saguinus imperator (Emperor tamarin).